The sequence spans 284 residues: ADP-polyphosphate phosphotransferase 3 (284 aa).

Composition is skewed to basic and acidic residues over residues methionine 1–alanine 22 and aspartate 260–arginine 277. Disordered regions lie at residues methionine 1–glycine 32 and aspartate 260–phenylalanine 284.

This sequence belongs to the polyphosphate kinase 2 (PPK2) family. Class I subfamily.

The catalysed reaction is [phosphate](n) + ATP = [phosphate](n+1) + ADP. It carries out the reaction [phosphate](n) + GTP = [phosphate](n+1) + GDP. In terms of biological role, uses inorganic polyphosphate (polyP) as a donor to convert ADP to ATP. Can also convert GDP to GTP, with lower efficiency. This chain is ADP-polyphosphate phosphotransferase 3, found in Rhizobium meliloti (strain 1021) (Ensifer meliloti).